Here is a 338-residue protein sequence, read N- to C-terminus: Ketol-acid reductoisomerase (NADP(+)) (338 aa).

A KARI N-terminal Rossmann domain is found at 1-181; it reads MKVFYDKDAD…GGGRAGIIET (181 aa). Residues 24 to 27, Arg-47, and Ser-52 each bind NADP(+); that span reads YGSQ. Residue His-107 is part of the active site. Position 133 (Gly-133) interacts with NADP(+). The KARI C-terminal knotted domain occupies 182 to 327; that stretch reads NFREETETDL…AKLRAMMPWI (146 aa). Mg(2+) is bound by residues Asp-190, Glu-194, Glu-226, and Glu-230. Ser-251 provides a ligand contact to substrate.

This sequence belongs to the ketol-acid reductoisomerase family. Mg(2+) serves as cofactor.

It carries out the reaction (2R)-2,3-dihydroxy-3-methylbutanoate + NADP(+) = (2S)-2-acetolactate + NADPH + H(+). It catalyses the reaction (2R,3R)-2,3-dihydroxy-3-methylpentanoate + NADP(+) = (S)-2-ethyl-2-hydroxy-3-oxobutanoate + NADPH + H(+). It participates in amino-acid biosynthesis; L-isoleucine biosynthesis; L-isoleucine from 2-oxobutanoate: step 2/4. The protein operates within amino-acid biosynthesis; L-valine biosynthesis; L-valine from pyruvate: step 2/4. Involved in the biosynthesis of branched-chain amino acids (BCAA). Catalyzes an alkyl-migration followed by a ketol-acid reduction of (S)-2-acetolactate (S2AL) to yield (R)-2,3-dihydroxy-isovalerate. In the isomerase reaction, S2AL is rearranged via a Mg-dependent methyl migration to produce 3-hydroxy-3-methyl-2-ketobutyrate (HMKB). In the reductase reaction, this 2-ketoacid undergoes a metal-dependent reduction by NADPH to yield (R)-2,3-dihydroxy-isovalerate. The sequence is that of Ketol-acid reductoisomerase (NADP(+)) from Polynucleobacter asymbioticus (strain DSM 18221 / CIP 109841 / QLW-P1DMWA-1) (Polynucleobacter necessarius subsp. asymbioticus).